Consider the following 360-residue polypeptide: S-adenosylmethionine:tRNA ribosyltransferase-isomerase (360 aa).

This sequence belongs to the QueA family. In terms of assembly, monomer.

The protein localises to the cytoplasm. The catalysed reaction is 7-aminomethyl-7-carbaguanosine(34) in tRNA + S-adenosyl-L-methionine = epoxyqueuosine(34) in tRNA + adenine + L-methionine + 2 H(+). Its pathway is tRNA modification; tRNA-queuosine biosynthesis. In terms of biological role, transfers and isomerizes the ribose moiety from AdoMet to the 7-aminomethyl group of 7-deazaguanine (preQ1-tRNA) to give epoxyqueuosine (oQ-tRNA). The chain is S-adenosylmethionine:tRNA ribosyltransferase-isomerase from Burkholderia mallei (strain NCTC 10247).